The chain runs to 490 residues: MALNSGSPPGIGPCYENHGYQSEHICPPRPPVAPNGYNLYPAQYYPSPVPQYAPRITTQASTSVIHTHPKSSGALCTSKSKKSLCLALALGTVLTGAAVAAVLLWRFWDSNCSTSEMECGSSGTCISSSLWCDGVAHCPNGEDENRCVRLYGQSFILQVYSSQRKAWYPVCQDDWSESYGRAACKDMGYKNNFYSSQGIPDQSGATSFMKLNVSSGNVDLYKKLYHSDSCSSRMVVSLRCIECGVRSVKRQSRIVGGLNASPGDWPWQVSLHVQGVHVCGGSIITPEWIVTAAHCVEEPLSSPRYWTAFAGILRQSLMFYGSRHQVEKVISHPNYDSKTKNNDIALMKLQTPLAFNDLVKPVCLPNPGMMLDLDQECWISGWGATYEKGKTSDVLNAAMVPLIEPSKCNSKYIYNNLITPAMICAGFLQGSVDSCQGDSGGPLVTLKNGIWWLIGDTSWGSGCAKALRPGVYGNVTVFTDWIYQQMRANS.

At 1-83 (MALNSGSPPG…ALCTSKSKKS (83 aa)) the chain is on the cytoplasmic side. Residues 84-104 (LCLALALGTVLTGAAVAAVLL) form a helical; Signal-anchor for type II membrane protein membrane-spanning segment. At 105–490 (WRFWDSNCST…WIYQQMRANS (386 aa)) the chain is on the extracellular side. Asparagine 111 is a glycosylation site (N-linked (GlcNAc...) asparagine). The LDL-receptor class A domain occupies 111–149 (NCSTSEMECGSSGTCISSSLWCDGVAHCPNGEDENRCVR). 9 cysteine pairs are disulfide-bonded: cysteine 112-cysteine 125, cysteine 119-cysteine 138, cysteine 132-cysteine 147, cysteine 171-cysteine 230, cysteine 184-cysteine 240, cysteine 243-cysteine 363, cysteine 279-cysteine 295, cysteine 408-cysteine 424, and cysteine 435-cysteine 463. Residues aspartate 133, valine 135, aspartate 143, and glutamate 144 each contribute to the Ca(2+) site. The 93-residue stretch at 150–242 (LYGQSFILQV…RMVVSLRCIE (93 aa)) folds into the SRCR domain. Asparagine 212 is a glycosylation site (N-linked (GlcNAc...) asparagine). The 234-residue stretch at 254 to 487 (IVGGLNASPG…FTDWIYQQMR (234 aa)) folds into the Peptidase S1 domain. Residues histidine 294 and aspartate 343 each act as charge relay system in the active site. Serine 439 (charge relay system) is an active-site residue. A glycan (N-linked (GlcNAc...) asparagine) is linked at asparagine 474.

The protein belongs to the peptidase S1 family. As to quaternary structure, the catalytically active form interacts with ACE2. Post-translationally, proteolytically processed; by an autocatalytic mechanism. Autocleavage induces active conformation. In terms of tissue distribution, larynx, trachea and bronchi, lung, prostate and kidney.

Its subcellular location is the cell membrane. It is found in the secreted. The catalysed reaction is The enzyme cleaves angiotensin-converting enzyme 2 (EC 3.4.17.23) and cleaves influenzea A and B virus and coronavirus spike glycoproteins at arginine residues.. In terms of biological role, plasma membrane-anchored serine protease that cleaves at arginine residues. Participates in proteolytic cascades of relevance for the normal physiologic function of the prostate. Androgen-induced TMPRSS2 activates several substrates that include pro-hepatocyte growth factor/HGF, the protease activated receptor-2/F2RL1 or matriptase/ST14 leading to extracellular matrix disruption. In addition, activates trigeminal neurons and contribute to both spontaneous pain and mechanical allodynia. Its function is as follows. (Microbial infection) Essential for spread and pathogenesis of influenza A virus (strains H1N1, H3N2 and H7N9) and is involved in proteolytic cleavage and activation of hemagglutinin (HA) protein which is essential for viral infectivity. This Mus musculus (Mouse) protein is Transmembrane protease serine 2 (Tmprss2).